Consider the following 423-residue polypeptide: ATP-citrate synthase alpha chain protein 2 (423 aa).

Asparagine 343, threonine 345, and arginine 376 together coordinate citrate.

The protein belongs to the succinate/malate CoA ligase beta subunit family. In terms of assembly, heterooctamer of 4 alpha and 4 beta chains.

The protein resides in the cytoplasm. It is found in the cytosol. The catalysed reaction is oxaloacetate + acetyl-CoA + ADP + phosphate = citrate + ATP + CoA. Its function is as follows. ATP citrate-lyase is the primary enzyme responsible for the synthesis of cytosolic acetyl-CoA, used for the elongation of fatty acids and biosynthesis of isoprenoids, flavonoids and malonated derivatives. May supply substrate to the cytosolic acetyl-CoA carboxylase, which generates the malonyl-CoA used for the synthesis of a multitude of compounds, including very long chain fatty acids and flavonoids. In contrast to all known animal ACL enzymes having a homomeric structure, plant ACLs are composed of alpha and beta chains. The protein is ATP-citrate synthase alpha chain protein 2 (ACLA-2) of Oryza sativa subsp. japonica (Rice).